The chain runs to 547 residues: Intercellular adhesion molecule 3 (547 aa).

An N-terminal signal peptide occupies residues Met1 to Gly29. At Gln30 to His485 the chain is on the extracellular side. An Ig-like C2-type 1 domain is found at Gly46–Ser103. 6 N-linked (GlcNAc...) asparagine glycosylation sites follow: Asn52, Asn84, Asn87, Asn101, Asn110, and Asn134. Disulfide bonds link Cys53/Cys96 and Cys57/Cys100. One can recognise an Ig-like C2-type 2 domain in the interval Gly132–Gln197. Cysteines 139 and 190 form a disulfide. N-linked (GlcNAc...) asparagine glycosylation is found at Asn206, Asn264, Asn295, Asn308, Asn320, Asn363, Asn389, Asn453, and Asn457. In terms of domain architecture, Ig-like C2-type 3 spans Glu234–Glu301. Cys241 and Cys294 are joined by a disulfide. The Ig-like C2-type 4 domain occupies Gly329–Asp382. A disulfide bridge connects residues Cys336 and Cys375. The 54-residue stretch at Lys416–Gly469 folds into the Ig-like C2-type 5 domain. The cysteines at positions 423 and 462 are disulfide-linked. The helical transmembrane segment at Phe486–Phe510 threads the bilayer. At Arg511 to Glu547 the chain is on the cytoplasmic side.

Belongs to the immunoglobulin superfamily. ICAM family. As to quaternary structure, interacts with moesin/MSN. Post-translationally, upon stimulation by a physiologic stimuli becomes rapidly and transiently phosphorylated on serine residues. As to expression, leukocytes.

It is found in the membrane. Its function is as follows. ICAM proteins are ligands for the leukocyte adhesion protein LFA-1 (integrin alpha-L/beta-2). ICAM3 is also a ligand for integrin alpha-D/beta-2. In association with integrin alpha-L/beta-2, contributes to apoptotic neutrophil phagocytosis by macrophages. This is Intercellular adhesion molecule 3 (ICAM3) from Pan troglodytes (Chimpanzee).